Reading from the N-terminus, the 227-residue chain is tRNA (guanine-N(1)-)-methyltransferase (227 aa).

Residues G110 and I129–L134 contribute to the S-adenosyl-L-methionine site.

This sequence belongs to the RNA methyltransferase TrmD family. Homodimer.

It localises to the cytoplasm. The enzyme catalyses guanosine(37) in tRNA + S-adenosyl-L-methionine = N(1)-methylguanosine(37) in tRNA + S-adenosyl-L-homocysteine + H(+). Functionally, specifically methylates guanosine-37 in various tRNAs. In Mycoplasmopsis agalactiae (strain NCTC 10123 / CIP 59.7 / PG2) (Mycoplasma agalactiae), this protein is tRNA (guanine-N(1)-)-methyltransferase.